The chain runs to 286 residues: Pantothenate synthetase (286 aa).

30-37 (MGNLHSGH) is a binding site for ATP. The active-site Proton donor is the H37. Q61 lines the (R)-pantoate pocket. Residue Q61 participates in beta-alanine binding. ATP is bound at residue 149–152 (GQKD). Q155 is a (R)-pantoate binding site. Residues V178 and 186–189 (LSSR) each bind ATP.

Belongs to the pantothenate synthetase family. As to quaternary structure, homodimer.

The protein resides in the cytoplasm. It catalyses the reaction (R)-pantoate + beta-alanine + ATP = (R)-pantothenate + AMP + diphosphate + H(+). It participates in cofactor biosynthesis; (R)-pantothenate biosynthesis; (R)-pantothenate from (R)-pantoate and beta-alanine: step 1/1. Catalyzes the condensation of pantoate with beta-alanine in an ATP-dependent reaction via a pantoyl-adenylate intermediate. This Pseudomonas fluorescens (strain ATCC BAA-477 / NRRL B-23932 / Pf-5) protein is Pantothenate synthetase.